Here is a 360-residue protein sequence, read N- to C-terminus: Phospho-N-acetylmuramoyl-pentapeptide-transferase (360 aa).

The next 10 membrane-spanning stretches (helical) occupy residues 3 to 23 (SILVGAAVALVVSILFTPYLI), 52 to 72 (MGGVAILVAMWAGYLVAHLTV), 81 to 101 (GLLVLGLTTALGIVGFLDDFI), 115 to 135 (AKLVGQLVASVLFAVLAMQFA), 153 to 173 (ITVISFGSVGFVIFAYIAISG), 187 to 207 (LAGGTAAMVLAIYVVISFWQF), 230 to 250 (IALVAGAAMAACVGFLWWNAA), 254 to 274 (IFMGDTGSLALGGLLAGLSMV), 282 to 302 (IIIGGLFVVEALSVVMQIVVF), and 333 to 353 (FWVLAAISAMFGLGLFYADWL).

It belongs to the glycosyltransferase 4 family. MraY subfamily. It depends on Mg(2+) as a cofactor.

It localises to the cell membrane. It carries out the reaction UDP-N-acetyl-alpha-D-muramoyl-L-alanyl-gamma-D-glutamyl-meso-2,6-diaminopimeloyl-D-alanyl-D-alanine + di-trans,octa-cis-undecaprenyl phosphate = di-trans,octa-cis-undecaprenyl diphospho-N-acetyl-alpha-D-muramoyl-L-alanyl-D-glutamyl-meso-2,6-diaminopimeloyl-D-alanyl-D-alanine + UMP. Its pathway is cell wall biogenesis; peptidoglycan biosynthesis. In terms of biological role, catalyzes the initial step of the lipid cycle reactions in the biosynthesis of the cell wall peptidoglycan: transfers peptidoglycan precursor phospho-MurNAc-pentapeptide from UDP-MurNAc-pentapeptide onto the lipid carrier undecaprenyl phosphate, yielding undecaprenyl-pyrophosphoryl-MurNAc-pentapeptide, known as lipid I. The chain is Phospho-N-acetylmuramoyl-pentapeptide-transferase from Saccharopolyspora erythraea (strain ATCC 11635 / DSM 40517 / JCM 4748 / NBRC 13426 / NCIMB 8594 / NRRL 2338).